The chain runs to 133 residues: Histone H2A.Z (133 aa).

Positions 1 to 11 (MSGKGKVHGGK) are enriched in basic residues. The tract at residues 1–30 (MSGKGKVHGGKGKSSDSAKASTSHSARAGL) is disordered. N-acetylserine is present on S2. K4, K11, and K13 each carry N6-acetyllysine. The segment covering 15–26 (SDSAKASTSHSA) has biased composition (low complexity).

It belongs to the histone H2A family. The nucleosome is a histone octamer containing two molecules each of H2A, H2B, H3 and H4 assembled in one H3-H4 heterotetramer and two H2A-H2B heterodimers. The octamer wraps approximately 147 bp of DNA. H2A or its variant H2A.Z forms a heterodimer with H2B. H2A.Z associates with the VPS72/SWC2 subunit of the SWR1 chromatin remodeling complex. Also interacts with RBP1/DNA-directed RNA polymerase II largest subunit. In terms of processing, acetylated once deposited into chromatin.

It is found in the nucleus. It localises to the chromosome. Functionally, variant histone H2A which can replace H2A in some nucleosomes. Nucleosomes wrap and compact DNA into chromatin, limiting DNA accessibility to the cellular machineries which require DNA as a template. Histones thereby play a central role in transcription regulation, DNA repair, DNA replication and chromosomal stability. DNA accessibility is regulated via a complex set of post-translational modifications of histones, also called histone code, and nucleosome remodeling. This variant is enriched at promoters, it may keep them in a repressed state until the appropriate activation signal is received. Near telomeres, it may counteract gene silencing caused by the spread of heterochromatin proteins. Required for the RNA polymerase II and SPT15/TBP recruitment to the target genes. Involved in chromosome stability. The sequence is that of Histone H2A.Z (HTZ1) from Meyerozyma guilliermondii (strain ATCC 6260 / CBS 566 / DSM 6381 / JCM 1539 / NBRC 10279 / NRRL Y-324) (Yeast).